The following is a 665-amino-acid chain: Long chain acyl-CoA synthetase 3 (665 aa).

Residue 228–239 participates in ATP binding; that stretch reads IMYTSGTTGDPK. The interval 495-519 is fatty acid-binding; the sequence is DGWLHTGDVGEWQPDGAMKIIDRKK.

It belongs to the ATP-dependent AMP-binding enzyme family. Requires Mg(2+) as cofactor.

The enzyme catalyses a long-chain fatty acid + ATP + CoA = a long-chain fatty acyl-CoA + AMP + diphosphate. Its pathway is lipid metabolism; fatty acid metabolism. In terms of biological role, activation of long-chain fatty acids for both synthesis of cellular lipids, and degradation via beta-oxidation. Preferentially uses palmitate, palmitoleate, oleate and linoleate. The protein is Long chain acyl-CoA synthetase 3 (LACS3) of Arabidopsis thaliana (Mouse-ear cress).